Here is a 133-residue protein sequence, read N- to C-terminus: MSQDFSREKRLLTPRHFKAVFDSPTGKVPGKNLLLLARNNDLDHPRLGLVIGKKSVKLSVERNRLKRLMRESFRLHQDSLVGWDIVIVARKGLGDVENPELIQHFGKLWKRLARNKPVPAVKTETVGVDSPDA.

Belongs to the RnpA family. As to quaternary structure, consists of a catalytic RNA component (M1 or rnpB) and a protein subunit.

The enzyme catalyses Endonucleolytic cleavage of RNA, removing 5'-extranucleotides from tRNA precursor.. Its function is as follows. RNaseP catalyzes the removal of the 5'-leader sequence from pre-tRNA to produce the mature 5'-terminus. It can also cleave other RNA substrates such as 4.5S RNA. The protein component plays an auxiliary but essential role in vivo by binding to the 5'-leader sequence and broadening the substrate specificity of the ribozyme. The chain is Ribonuclease P protein component from Pseudomonas fluorescens (strain Pf0-1).